The following is a 393-amino-acid chain: Argininosuccinate synthase (393 aa).

ATP contacts are provided by residues 7-15 (AYSGGLDTS) and Ala-34. L-citrulline-binding residues include Tyr-85 and Ser-90. An ATP-binding site is contributed by Gly-115. Thr-117, Asn-121, and Asp-122 together coordinate L-aspartate. Residue Asn-121 coordinates L-citrulline. The L-citrulline site is built by Arg-125, Ser-176, Ser-185, Glu-261, and Tyr-273.

It belongs to the argininosuccinate synthase family. Type 1 subfamily. Homotetramer.

Its subcellular location is the cytoplasm. It carries out the reaction L-citrulline + L-aspartate + ATP = 2-(N(omega)-L-arginino)succinate + AMP + diphosphate + H(+). Its pathway is amino-acid biosynthesis; L-arginine biosynthesis; L-arginine from L-ornithine and carbamoyl phosphate: step 2/3. This Ehrlichia canis (strain Jake) protein is Argininosuccinate synthase.